We begin with the raw amino-acid sequence, 277 residues long: tRNA U34 carboxymethyltransferase (277 aa).

Carboxy-S-adenosyl-L-methionine is bound by residues Lys-46, Trp-60, Lys-65, Gly-84, 106 to 108 (DPS), 133 to 134 (VE), Tyr-153, and Arg-268.

Belongs to the class I-like SAM-binding methyltransferase superfamily. CmoB family. As to quaternary structure, homotetramer.

The enzyme catalyses carboxy-S-adenosyl-L-methionine + 5-hydroxyuridine(34) in tRNA = 5-carboxymethoxyuridine(34) in tRNA + S-adenosyl-L-homocysteine + H(+). Its function is as follows. Catalyzes carboxymethyl transfer from carboxy-S-adenosyl-L-methionine (Cx-SAM) to 5-hydroxyuridine (ho5U) to form 5-carboxymethoxyuridine (cmo5U) at position 34 in tRNAs. The sequence is that of tRNA U34 carboxymethyltransferase from Wolinella succinogenes (strain ATCC 29543 / DSM 1740 / CCUG 13145 / JCM 31913 / LMG 7466 / NCTC 11488 / FDC 602W) (Vibrio succinogenes).